Consider the following 481-residue polypeptide: Proline--tRNA ligase (481 aa).

This sequence belongs to the class-II aminoacyl-tRNA synthetase family. ProS type 3 subfamily. In terms of assembly, homodimer.

The protein resides in the cytoplasm. It catalyses the reaction tRNA(Pro) + L-proline + ATP = L-prolyl-tRNA(Pro) + AMP + diphosphate. In terms of biological role, catalyzes the attachment of proline to tRNA(Pro) in a two-step reaction: proline is first activated by ATP to form Pro-AMP and then transferred to the acceptor end of tRNA(Pro). This chain is Proline--tRNA ligase, found in Pelodictyon phaeoclathratiforme (strain DSM 5477 / BU-1).